Here is a 551-residue protein sequence, read N- to C-terminus: Cytochrome P450 monooxygenase abl5 (551 aa).

Asparagine 24 is a glycosylation site (N-linked (GlcNAc...) asparagine). The chain crosses the membrane as a helical span at residues valine 37–tyrosine 57. Asparagine 174, asparagine 218, asparagine 283, asparagine 307, and asparagine 441 each carry an N-linked (GlcNAc...) asparagine glycan. Cysteine 495 serves as a coordination point for heme.

This sequence belongs to the cytochrome P450 family. The cofactor is heme.

It is found in the membrane. Functionally, cytochrome P450 monooxygenase; part of the gene cluster that mediates the biosynthesis of abscisic acid (ABA), a phytohormone that acts antagonistically toward salicylic acid (SA), jasmonic acid (JA) and ethylene (ETH) signaling, to impede plant defense responses. The first step of the pathway catalyzes the reaction from farnesyl diphosphate to alpha-ionylideneethane performed by the alpha-ionylideneethane synthase abl3 via a three-step reaction mechanism involving 2 neutral intermediates, beta-farnesene and allofarnesene. The cytochrome P450 monooxygenase abl1 might then be involved in the conversion of alpha-ionylideneethane to alpha-ionylideneacetic acid. Alpha-ionylideneacetic acid is further converted to abscisic acid in 2 steps involving the cytochrome P450 monooxygenase abl2 and the short-chain dehydrogenase/reductase abl4, via the intermediates 1'-deoxy-ABA or 1',4'-trans-diol-ABA, depending on the order of action of these 2 enzymes. Abl2 is responsible for the hydroxylation of carbon atom C-1' and abl4 might be involved in the oxidation of the C-4' carbon atom. The cytochrome monooxygenase abl5 seems not essential for the biosynthesis of ABA and its function remains to be identified. This Leptosphaeria maculans (strain JN3 / isolate v23.1.3 / race Av1-4-5-6-7-8) (Blackleg fungus) protein is Cytochrome P450 monooxygenase abl5.